We begin with the raw amino-acid sequence, 250 residues long: MTMPLRGLGPPDDTGVREVSTGDDHHYAMWDAAYVLGALSAADRREFEAHLAGCPECRGAVTELCGVPALLSQLDRDEVAAISESAPTVVASGLSPELLPSLLAAVHRRRRRTRLITWVASSAAAAVLAIGVLVGVQGHSAAPQRAAVSALPMAQVGTQLLASTVSISGEPWGTFINLRCVCLAPPYASHDTLAMVVVGRDGSQTRLATWLAEPGHTATPAGSISTPVDQIAAVQVVAADTGQVLLQRSL.

At methionine 1–leucine 115 the chain is on the cytoplasmic side. The helical transmembrane segment at isoleucine 116–valine 136 threads the bilayer. At glutamine 137 to leucine 250 the chain is on the extracellular side.

In terms of assembly, interacts with ECF RNA polymerase sigma factor SigL; this should inhibit the interaction of SigL with the RNA polymerase catalytic core. In terms of processing, probably cleaved within the membrane by Rip1 near the cytoplasmic membrane interface.

The protein resides in the cell membrane. In terms of biological role, an anti-sigma factor for extracytoplasmic function (ECF) sigma factor SigL. ECF sigma factors are held in an inactive form by an anti-sigma factor until released by regulated intramembrane proteolysis (RIP). RIP occurs when an extracytoplasmic signal triggers a concerted proteolytic cascade to transmit information and elicit cellular responses. The membrane-spanning regulatory substrate protein is first cut extracytoplasmically (site-1 protease, S1P), then within the membrane itself (site-2 protease, S2P, Rip1), while cytoplasmic proteases finish degrading the regulatory protein, liberating the sigma factor. The polypeptide is Anti-sigma-L factor RslA (rslA) (Mycobacterium tuberculosis (strain ATCC 35801 / TMC 107 / Erdman)).